The following is a 231-amino-acid chain: Urease accessory protein UreF (231 aa).

Belongs to the UreF family. In terms of assembly, ureD, UreF and UreG form a complex that acts as a GTP-hydrolysis-dependent molecular chaperone, activating the urease apoprotein by helping to assemble the nickel containing metallocenter of UreC. The UreE protein probably delivers the nickel.

Its subcellular location is the cytoplasm. Functionally, required for maturation of urease via the functional incorporation of the urease nickel metallocenter. The sequence is that of Urease accessory protein UreF from Marinobacter nauticus (strain ATCC 700491 / DSM 11845 / VT8) (Marinobacter aquaeolei).